The chain runs to 183 residues: Ribosome maturation factor RimM (183 aa).

The PRC barrel domain maps to 104-183; it reads EGDYYWKDLM…TIEVDWDPGF (80 aa).

The protein belongs to the RimM family. As to quaternary structure, binds ribosomal protein uS19.

It is found in the cytoplasm. In terms of biological role, an accessory protein needed during the final step in the assembly of 30S ribosomal subunit, possibly for assembly of the head region. Essential for efficient processing of 16S rRNA. May be needed both before and after RbfA during the maturation of 16S rRNA. It has affinity for free ribosomal 30S subunits but not for 70S ribosomes. This Salmonella arizonae (strain ATCC BAA-731 / CDC346-86 / RSK2980) protein is Ribosome maturation factor RimM.